We begin with the raw amino-acid sequence, 636 residues long: tRNA 5-methylaminomethyl-2-thiouridine biosynthesis bifunctional protein MnmC (636 aa).

A tRNA (mnm(5)s(2)U34)-methyltransferase region spans residues 1 to 202 (MTVSKILKQV…ERAALRAQSH (202 aa)). Residues 227–636 (IGGGVASACL…GKALEMSGKS (410 aa)) form an FAD-dependent cmnm(5)s(2)U34 oxidoreductase region.

This sequence in the N-terminal section; belongs to the methyltransferase superfamily. tRNA (mnm(5)s(2)U34)-methyltransferase family. It in the C-terminal section; belongs to the DAO family. FAD serves as cofactor.

It localises to the cytoplasm. The enzyme catalyses 5-aminomethyl-2-thiouridine(34) in tRNA + S-adenosyl-L-methionine = 5-methylaminomethyl-2-thiouridine(34) in tRNA + S-adenosyl-L-homocysteine + H(+). Functionally, catalyzes the last two steps in the biosynthesis of 5-methylaminomethyl-2-thiouridine (mnm(5)s(2)U) at the wobble position (U34) in tRNA. Catalyzes the FAD-dependent demodification of cmnm(5)s(2)U34 to nm(5)s(2)U34, followed by the transfer of a methyl group from S-adenosyl-L-methionine to nm(5)s(2)U34, to form mnm(5)s(2)U34. The chain is tRNA 5-methylaminomethyl-2-thiouridine biosynthesis bifunctional protein MnmC from Shewanella halifaxensis (strain HAW-EB4).